Here is a 764-residue protein sequence, read N- to C-terminus: uncharacterized protein (764 aa).

Topologically, residues 1 to 646 are lumenal; sequence MKEENGFAGF…LTKLYTFPFT (646 aa). Residues 22–173 form a disordered region; sequence LNDTAPTKSQ…SAITAPSRKV (152 aa). Asn-23 carries N-linked (GlcNAc...) asparagine glycosylation. 2 stretches are compositionally biased toward polar residues: residues 25 to 41 and 61 to 82; these read TAPTKSQSLKNGVNNEG and SEASSHSTLGQQQARDGRQSPS. Phosphoserine is present on Ser-80. Positions 98–113 are enriched in acidic residues; it reads ENQENEADEAENEETS. The N-linked (GlcNAc...) asparagine glycan is linked to Asn-118. Residues 118 to 145 show a composition bias toward basic and acidic residues; it reads NHTENTEEIAEESRPLERTHSGSNHHEA. Positions 158–173 are enriched in polar residues; it reads NTLSQGSAITAPSRKV. Positions 197-264 constitute a GRAM domain; that stretch reads RDFHRIFKVL…TEIVSVEKKS (68 aa). 2 N-linked (GlcNAc...) asparagine glycosylation sites follow: Asn-240 and Asn-330. The tract at residues 320–406 is disordered; it reads ASGNHHSGSS…DGNSVKKMNE (87 aa). Residues 321–330 show a composition bias toward low complexity; sequence SGNHHSGSSN. Positions 331–340 are enriched in polar residues; it reads QSINADSSAG. The segment covering 352–371 has biased composition (acidic residues); that stretch reads ANDESSEDDDEDNNTDEANE. Residues Asn-364 and Asn-376 are each glycosylated (N-linked (GlcNAc...) asparagine). Polar residues predominate over residues 389–399; that stretch reads HSDNVVLSDGN. Residues 432 to 598 enclose the VASt domain; that stretch reads LAHVLCSDVV…AFENYKVSPK (167 aa). N-linked (GlcNAc...) asparagine glycans are attached at residues Asn-442 and Asn-554. Residues 598-613 are compositionally biased toward basic residues; the sequence is KGRRKKITKHTKKKNK. The segment at 598 to 626 is disordered; sequence KGRRKKITKHTKKKNKHASETSVAPEKVD. The N-linked (GlcNAc...) asparagine glycan is linked to Asn-627. The helical transmembrane segment at 647–667 threads the bilayer; sequence IITWLMHPTHLLLVVMFSMLV. Residues 668–764 are Cytoplasmic-facing; the sequence is LQWWYMQQIL…LRKLEASGYI (97 aa).

This sequence belongs to the YSP2 family.

Its subcellular location is the membrane. This is an uncharacterized protein from Schizosaccharomyces pombe (strain 972 / ATCC 24843) (Fission yeast).